A 484-amino-acid chain; its full sequence is Trigger factor (484 aa).

In terms of domain architecture, PPIase FKBP-type spans Gly-162–Pro-243. Residues Asp-427 to Gly-484 form a disordered region. Positions Asp-444–Ser-476 are enriched in acidic residues.

This sequence belongs to the FKBP-type PPIase family. Tig subfamily.

It is found in the cytoplasm. It catalyses the reaction [protein]-peptidylproline (omega=180) = [protein]-peptidylproline (omega=0). Its function is as follows. Involved in protein export. Acts as a chaperone by maintaining the newly synthesized protein in an open conformation. Functions as a peptidyl-prolyl cis-trans isomerase. The chain is Trigger factor from Mycobacterium marinum (strain ATCC BAA-535 / M).